A 251-amino-acid chain; its full sequence is Cell division protein ZapD (251 aa).

This sequence belongs to the ZapD family. In terms of assembly, interacts with FtsZ.

The protein localises to the cytoplasm. Cell division factor that enhances FtsZ-ring assembly. Directly interacts with FtsZ and promotes bundling of FtsZ protofilaments, with a reduction in FtsZ GTPase activity. This is Cell division protein ZapD from Paraburkholderia phytofirmans (strain DSM 17436 / LMG 22146 / PsJN) (Burkholderia phytofirmans).